A 379-amino-acid chain; its full sequence is Nucleosome assembly protein 1;2 (379 aa).

Positions 26 to 80 form a coiled coil; it reads VNALKNKLQNLAGQHSDVLENLTPPVRKRVEFLREIQNQYDEMEAKFFEERAALE. Ser-41 carries the phosphoserine modification. The Nuclear export signal signature appears at 47 to 62; sequence LTPPVRKRVEFLREIQ. A Nuclear localization signal motif is present at residues 222–227; the sequence is KKKPKK. Residues 298–379 form a disordered region; sequence AVEADDLDIE…GERPPECKQQ (82 aa). Residues 299–342 show a composition bias toward acidic residues; it reads VEADDLDIEDDDDEIDEDDDEEDEEDDEDDEEEDDEDDDEEEEA. Over residues 347–360 the composition is skewed to basic residues; it reads KSKKKSSAGHKKAG. At Cys-376 the chain carries Cysteine methyl ester. The S-farnesyl cysteine moiety is linked to residue Cys-376. Residues 377–379 constitute a propeptide, removed in mature form; it reads KQQ.

It belongs to the nucleosome assembly protein (NAP) family. As to quaternary structure, can form homomeric and heteromeric protein complexes with NAP1;1, NAP1;3 and NAP1;4. Binds histone H2A. Ubiquitous.

The protein localises to the nucleus. The protein resides in the cytoplasm. Its function is as follows. May modulate chromatin structure by regulation of nucleosome assembly/disassembly. May function in nucleotide excision repair (NER). Involved in somatic homologous recombination. The protein is Nucleosome assembly protein 1;2 (NAP1;2) of Arabidopsis thaliana (Mouse-ear cress).